The sequence spans 148 residues: Globin-3 (148 aa).

Residues 2-148 (TLTKHEQDIL…HVFPMMAAEI (147 aa)) form the Globin domain. His-99 contacts heme.

This sequence belongs to the globin family. Monomer.

Functionally, oxygen binding protein. The protein is Globin-3 of Paramphistomum epiclitum.